Here is a 576-residue protein sequence, read N- to C-terminus: Mycobactin import ATP-binding/permease protein IrtB (576 aa).

The Cytoplasmic segment spans residues M1 to V25. Positions L19–S299 constitute an ABC transmembrane type-1 domain. Residues L26–F46 form a helical membrane-spanning segment. Over G47–D52 the chain is Periplasmic. The chain crosses the membrane as a helical span at residues A53 to T73. The Cytoplasmic segment spans residues T74–L131. The next 2 helical transmembrane spans lie at L132–V152 and S153–A173. Residues S174–Q241 are Cytoplasmic-facing. A helical transmembrane segment spans residues L242–L262. The Periplasmic portion of the chain corresponds to T263–E267. Residues L268–T288 traverse the membrane as a helical segment. Over S289–H576 the chain is Cytoplasmic. The region spanning I332–R565 is the ABC transporter domain. G364–S371 contacts ATP.

It belongs to the ABC transporter superfamily. Siderophore-Fe(3+) uptake transporter (SIUT) (TC 3.A.1.21) family. As to quaternary structure, forms a heterodimer with IrtA.

It is found in the cell inner membrane. Functionally, part of the ABC transporter complex IrtAB involved in the import of iron-bound mycobactin (Fe-MBT) and carboxymycobactin (Fe-cMBT). Has a preference for Fe-MBT over Fe-cMBT. Transmembrane domains (TMD) form a pore in the membrane and the ATP-binding domain (NBD) is responsible for energy generation. The polypeptide is Mycobactin import ATP-binding/permease protein IrtB (Mycolicibacterium smegmatis (strain ATCC 700084 / mc(2)155) (Mycobacterium smegmatis)).